Consider the following 177-residue polypeptide: Large ribosomal subunit protein uL6 (177 aa).

Over residues 152–171 (RPPEPYKGKGVRYDDEEVRR) the composition is skewed to basic and acidic residues. Residues 152 to 177 (RPPEPYKGKGVRYDDEEVRRKEAKKK) are disordered.

Belongs to the universal ribosomal protein uL6 family. In terms of assembly, part of the 50S ribosomal subunit.

In terms of biological role, this protein binds to the 23S rRNA, and is important in its secondary structure. It is located near the subunit interface in the base of the L7/L12 stalk, and near the tRNA binding site of the peptidyltransferase center. In Shewanella putrefaciens (strain CN-32 / ATCC BAA-453), this protein is Large ribosomal subunit protein uL6.